The primary structure comprises 372 residues: Tyrosine--tRNA ligase 1 (372 aa).

Residues Y37, Y169, Q173, D176, and Q191 each contribute to the L-tyrosine site. The 'KMSKS' region signature appears at 246–250; that stretch reads KMSKS. K249 contacts ATP.

The protein belongs to the class-I aminoacyl-tRNA synthetase family. TyrS type 4 subfamily. Homodimer.

Its subcellular location is the cytoplasm. It carries out the reaction tRNA(Tyr) + L-tyrosine + ATP = L-tyrosyl-tRNA(Tyr) + AMP + diphosphate + H(+). Functionally, catalyzes the attachment of tyrosine to tRNA(Tyr) in a two-step reaction: tyrosine is first activated by ATP to form Tyr-AMP and then transferred to the acceptor end of tRNA(Tyr). The sequence is that of Tyrosine--tRNA ligase 1 from Pyrobaculum aerophilum (strain ATCC 51768 / DSM 7523 / JCM 9630 / CIP 104966 / NBRC 100827 / IM2).